Here is a 445-residue protein sequence, read N- to C-terminus: Proline--tRNA ligase (445 aa).

Belongs to the class-II aminoacyl-tRNA synthetase family. ProS type 2 subfamily. As to quaternary structure, homodimer.

Its subcellular location is the cytoplasm. It carries out the reaction tRNA(Pro) + L-proline + ATP = L-prolyl-tRNA(Pro) + AMP + diphosphate. Catalyzes the attachment of proline to tRNA(Pro) in a two-step reaction: proline is first activated by ATP to form Pro-AMP and then transferred to the acceptor end of tRNA(Pro). In Caulobacter sp. (strain K31), this protein is Proline--tRNA ligase.